Here is a 506-residue protein sequence, read N- to C-terminus: MEFSVKSGSPEKQRSACIIVGVFEPRRLSSIAEQLDKISDGYISALLRRGELEGKVGQSLLLHHVPNVLSERILLIGCGKERELDERQYKQIIQKTINTLNETGSMEAVCFLTELHVKGRNNYWKVRQAVETAKESLYAFNQLKSNKNELRRPLRKMVFNVPTRRELTSGERAIQHGLAIAAGIKAAKDLSNMPPNICNAAYLASQARQLADSANSHITTKVIGEEQMKELGMNAYLAVGQGSQNESLMSVMEYKGSSDKHAKPIILVGKGLTFDSGGISIKSAGGMDEMKYDMCGAATVYGVMRVVSELQLPLNVIGVMAGCENMPGGRAYRPGDILTTLSGQTVEVLNTDAEGRLVLCDALTYVERFDPELVIDIATLTGACITALGNHYSGLLSNHNPLAHELLNASEQSGDRAWRLPMTDEFFEQIDSNFADLANTGGSGGGAITAACFLSRFATKYHWAHLDIAGTAWRSGKTKGATGRPVALLSQFLLNRAGSAGINNDD.

Mn(2+)-binding residues include Lys270 and Asp275. Lys282 is an active-site residue. Mn(2+) is bound by residues Asp293, Asp352, and Glu354. Arg356 is an active-site residue.

The protein belongs to the peptidase M17 family. Requires Mn(2+) as cofactor.

It is found in the cytoplasm. It carries out the reaction Release of an N-terminal amino acid, Xaa-|-Yaa-, in which Xaa is preferably Leu, but may be other amino acids including Pro although not Arg or Lys, and Yaa may be Pro. Amino acid amides and methyl esters are also readily hydrolyzed, but rates on arylamides are exceedingly low.. The enzyme catalyses Release of an N-terminal amino acid, preferentially leucine, but not glutamic or aspartic acids.. In terms of biological role, presumably involved in the processing and regular turnover of intracellular proteins. Catalyzes the removal of unsubstituted N-terminal amino acids from various peptides. The chain is Probable cytosol aminopeptidase from Photorhabdus laumondii subsp. laumondii (strain DSM 15139 / CIP 105565 / TT01) (Photorhabdus luminescens subsp. laumondii).